Reading from the N-terminus, the 203-residue chain is MSRYTGPRWKQSRRLGLSLSGTGKELARRPYAPGDHGANNRRKISEYGQQLREKQKLRWMYGLNERQFQNLFLRAGKIKEGTHGDNFMILLETRLDNLVFRLGLASSRPQARQLVNHGHITVDGKRVDIPSYEVEPGQVIALRERSQNLAIVNEAIENTVSRPAYVTFDDTKKTGSLVRLPERGELEPEVDESLVVEYYNQKL.

Residues 93 to 156 enclose the S4 RNA-binding domain; it reads TRLDNLVFRL…QNLAIVNEAI (64 aa).

The protein belongs to the universal ribosomal protein uS4 family. In terms of assembly, part of the 30S ribosomal subunit. Contacts protein S5. The interaction surface between S4 and S5 is involved in control of translational fidelity.

In terms of biological role, one of the primary rRNA binding proteins, it binds directly to 16S rRNA where it nucleates assembly of the body of the 30S subunit. Functionally, with S5 and S12 plays an important role in translational accuracy. The chain is Small ribosomal subunit protein uS4 from Lacticaseibacillus casei (strain BL23) (Lactobacillus casei).